We begin with the raw amino-acid sequence, 518 residues long: GMP synthase [glutamine-hydrolyzing] (518 aa).

The Glutamine amidotransferase type-1 domain occupies 6–200; that stretch reads RLLIIDFGSQ…FVRLAGFKGD (195 aa). Cys-84 acts as the Nucleophile in catalysis. Active-site residues include His-175 and Glu-177. Residues 201–393 enclose the GMPS ATP-PPase domain; sequence WTMGAYREEA…LGLPESFIGR (193 aa). ATP is bound at residue 228 to 234; that stretch reads SGGVDSS.

In terms of assembly, homodimer.

The catalysed reaction is XMP + L-glutamine + ATP + H2O = GMP + L-glutamate + AMP + diphosphate + 2 H(+). It functions in the pathway purine metabolism; GMP biosynthesis; GMP from XMP (L-Gln route): step 1/1. In terms of biological role, catalyzes the synthesis of GMP from XMP. This chain is GMP synthase [glutamine-hydrolyzing], found in Cereibacter sphaeroides (strain ATCC 17023 / DSM 158 / JCM 6121 / CCUG 31486 / LMG 2827 / NBRC 12203 / NCIMB 8253 / ATH 2.4.1.) (Rhodobacter sphaeroides).